The sequence spans 1376 residues: DNA-directed RNA polymerase subunit beta'' (1376 aa).

Positions 221, 290, 297, and 300 each coordinate Zn(2+). A disordered region spans residues 895 to 919 (PSGSGFPSDNELDHSNRNPFSSSYP).

It belongs to the RNA polymerase beta' chain family. RpoC2 subfamily. As to quaternary structure, in plastids the minimal PEP RNA polymerase catalytic core is composed of four subunits: alpha, beta, beta', and beta''. When a (nuclear-encoded) sigma factor is associated with the core the holoenzyme is formed, which can initiate transcription. Requires Zn(2+) as cofactor.

The protein resides in the plastid. It localises to the chloroplast. It carries out the reaction RNA(n) + a ribonucleoside 5'-triphosphate = RNA(n+1) + diphosphate. Functionally, DNA-dependent RNA polymerase catalyzes the transcription of DNA into RNA using the four ribonucleoside triphosphates as substrates. The sequence is that of DNA-directed RNA polymerase subunit beta'' from Pelargonium hortorum (Common geranium).